A 424-amino-acid chain; its full sequence is Cuticlin-1 (424 aa).

The first 18 residues, 1 to 18, serve as a signal peptide directing secretion; it reads MTWKPIICLAALVLSASA. The Extracellular portion of the chain corresponds to 19–392; that stretch reads IPVDNNVEGE…ATSTGICLTP (374 aa). A ZP domain is found at 32 to 277; it reads ECGPNSITVN…PTCSEPQGFG (246 aa). Residues cysteine 197 and cysteine 252 are joined by a disulfide bond. Tandem repeats lie at residues 302–305, 307–311, 312–315, and 320–323. Residues 302 to 323 form a 4 X 4 AA repeats of A-A-P-[AVI] region; the sequence is AAPVAAAAPVAAPVAAAAAAPA. A helical membrane pass occupies residues 393 to 413; sequence IGFASFLGIGTIVATALSATI. At 414-424 the chain is on the cytoplasmic side; that stretch reads FYVARPTSHKH.

The protein resides in the cell membrane. The protein localises to the secreted. In terms of biological role, component of the cuticles, which contributes to the formation of extracellular envelopes protecting the organism from the environment. Plays a role in alae formation in dauer larvae. This chain is Cuticlin-1, found in Caenorhabditis elegans.